Reading from the N-terminus, the 403-residue chain is Phosphopentomutase (403 aa).

Residues aspartate 13, aspartate 298, histidine 303, aspartate 339, histidine 340, and histidine 351 each coordinate Mn(2+).

It belongs to the phosphopentomutase family. The cofactor is Mn(2+).

The protein localises to the cytoplasm. The catalysed reaction is 2-deoxy-alpha-D-ribose 1-phosphate = 2-deoxy-D-ribose 5-phosphate. It catalyses the reaction alpha-D-ribose 1-phosphate = D-ribose 5-phosphate. It functions in the pathway carbohydrate degradation; 2-deoxy-D-ribose 1-phosphate degradation; D-glyceraldehyde 3-phosphate and acetaldehyde from 2-deoxy-alpha-D-ribose 1-phosphate: step 1/2. Functionally, isomerase that catalyzes the conversion of deoxy-ribose 1-phosphate (dRib-1-P) and ribose 1-phosphate (Rib-1-P) to deoxy-ribose 5-phosphate (dRib-5-P) and ribose 5-phosphate (Rib-5-P), respectively. The chain is Phosphopentomutase from Streptococcus thermophilus (strain ATCC BAA-491 / LMD-9).